We begin with the raw amino-acid sequence, 430 residues long: MPSVVVVGTQWGDEGKGKITDFLSSNAEVIARYQGGDNAGHTIVIDGKKFKLHLIPSGIFFPEKISVIGNGVVVNPKSLIEEIAYLAENGVSANSLRISDRAHVILPYHKKLDFLQEEAKGDKKIGTTIKGIGPAYMDKAARVGIRIADLLDKEIFEERLRTNLEVKNREFVKMYDSEPLEFEEIFEEYYEYGQQLKKYVTDTSVILNDALDAGKRVLFEGAQGVMLDIDQGTYPFVTSSNPVAGGVTIGSGVGPSKISKVVGVCKAYTSRVGDGPFPTELFDEVGHQIREVGHEYGTTTGRPRRVGWFDSVVMRHAKRVSGLTNLSLNSIDVLSGLETVKICVAYERSNGEQITHYPASLKELADCKPIYEELPGWSEDITSCRTLEELPEAARNYVRRVGELVGVRISTFSVGPGREQTNVLESVWGV.

GTP contacts are provided by residues 12–18 and 40–42; these read GDEGKGK and GHT. Residue Asp13 is the Proton acceptor of the active site. Residues Asp13 and Gly40 each contribute to the Mg(2+) site. IMP-binding positions include 13–16, 38–41, Thr128, Arg142, Gln223, Thr238, and Arg302; these read DEGK and NAGH. His41 (proton donor) is an active-site residue. Substrate is bound at residue 298–304; the sequence is TTTGRPR. GTP is bound by residues Arg304, 330–332, and 413–415; these read SID and SVG.

It belongs to the adenylosuccinate synthetase family. In terms of assembly, homodimer. Requires Mg(2+) as cofactor.

Its subcellular location is the cytoplasm. The catalysed reaction is IMP + L-aspartate + GTP = N(6)-(1,2-dicarboxyethyl)-AMP + GDP + phosphate + 2 H(+). It participates in purine metabolism; AMP biosynthesis via de novo pathway; AMP from IMP: step 1/2. Plays an important role in the de novo pathway of purine nucleotide biosynthesis. Catalyzes the first committed step in the biosynthesis of AMP from IMP. The polypeptide is Adenylosuccinate synthetase (Lactococcus lactis subsp. cremoris (strain SK11)).